A 360-amino-acid polypeptide reads, in one-letter code: Mitogen-activated protein kinase 14 (360 aa).

The residue at position 2 (serine 2) is an N-acetylserine. Serine 2 carries the phosphoserine modification. The residue at position 16 (threonine 16) is a Phosphothreonine. The 285-residue stretch at 24–308 folds into the Protein kinase domain; that stretch reads YQNLSPVGSG…AAQALAHAYF (285 aa). Residues 30–38 and lysine 53 contribute to the ATP site; that span reads VGSGAYGSV. Lysine 53 carries the post-translational modification N6-acetyllysine. The Proton acceptor role is filled by aspartate 150. Lysine 152 is subject to N6-acetyllysine. Threonine 180 bears the Phosphothreonine; by MAP2K3, MAP2K4, MAP2K6 and autocatalysis mark. At tyrosine 182 the chain carries Phosphotyrosine; by MAP2K3, MAP2K4, MAP2K6 and autocatalysis. Threonine 263 carries the post-translational modification Phosphothreonine. Tyrosine 323 is subject to Phosphotyrosine; by ZAP70.

This sequence belongs to the protein kinase superfamily. CMGC Ser/Thr protein kinase family. MAP kinase subfamily. Component of a signaling complex containing at least AKAP13, PKN1, MAPK14, ZAK and MAP2K3. Within this complex, AKAP13 interacts directly with PKN1, which in turn recruits MAPK14, MAP2K3 and ZAK. Binds to a kinase interaction motif within the protein tyrosine phosphatase, PTPRR. This interaction retains MAPK14 in the cytoplasm and prevents nuclear accumulation. Interacts with SPAG9 and GADD45A. Interacts with CDC25B, CDC25C, DUSP1, DUSP10, DUSP16, NP60, SUPT20H and TAB1. Interacts with casein kinase II subunits CSNK2A1 and CSNK2B. Interacts with PPM1D. Interacts with CDK5RAP3; recruits PPM1D to MAPK14 and may regulate its dephosphorylation. Interacts with DUSP2; this interaction does not lead to catalytic activation of DUSP2 and dephosphrylation of MAPK14. The cofactor is Mg(2+). Dually phosphorylated on Thr-180 and Tyr-182 by the MAP2Ks MAP2K3/MKK3, MAP2K4/MKK4 and MAP2K6/MKK6 in response to inflammatory cytokines, environmental stress or growth factors, which activates the enzyme. Dual phosphorylation can also be mediated by TAB1-mediated autophosphorylation. TCR engagement in T-cells also leads to Tyr-323 phosphorylation by ZAP70. Dephosphorylated and inactivated by DUPS1, DUSP10 and DUSP16. PPM1D also mediates dephosphorylation and inactivation of MAPK14. In terms of processing, acetylated at Lys-53 and Lys-152 by KAT2B and EP300. Acetylation at Lys-53 increases the affinity for ATP and enhances kinase activity. Lys-53 and Lys-152 are deacetylated by HDAC3. Post-translationally, ubiquitinated. Ubiquitination leads to degradation by the proteasome pathway.

Its subcellular location is the cytoplasm. The protein resides in the nucleus. The enzyme catalyses L-seryl-[protein] + ATP = O-phospho-L-seryl-[protein] + ADP + H(+). It carries out the reaction L-threonyl-[protein] + ATP = O-phospho-L-threonyl-[protein] + ADP + H(+). Activated by cell stresses such as DNA damage, heat shock, osmotic shock, anisomycin and sodium arsenite, as well as pro-inflammatory stimuli such as bacterial lipopolysaccharide (LPS) and interleukin-1. Activation occurs through dual phosphorylation of Thr-180 and Tyr-182 by either of two dual specificity kinases, MAP2K3/MKK3 or MAP2K6/MKK6, and potentially also MAP2K4/MKK4, as well as by TAB1-mediated autophosphorylation. MAPK14 phosphorylated on both Thr-180 and Tyr-182 is 10-20-fold more active than MAPK14 phosphorylated only on Thr-180, whereas MAPK14 phosphorylated on Tyr-182 alone is inactive. whereas Thr-180 is necessary for catalysis, Tyr-182 may be required for auto-activation and substrate recognition. Phosphorylated at Tyr-323 by ZAP70 in an alternative activation pathway in response to TCR signaling in T-cells. This alternative pathway is inhibited by GADD45A. Inhibited by dual specificity phosphatases, such as DUSP1, DUSP10, and DUSP16. Specifically inhibited by the binding of pyridinyl-imidazole compounds, which are cytokine-suppressive anti-inflammatory drugs (CSAID). SB203580 is an inhibitor of MAPK14. Serine/threonine kinase which acts as an essential component of the MAP kinase signal transduction pathway. MAPK14 is one of the four p38 MAPKs which play an important role in the cascades of cellular responses evoked by extracellular stimuli such as pro-inflammatory cytokines or physical stress leading to direct activation of transcription factors. Accordingly, p38 MAPKs phosphorylate a broad range of proteins and it has been estimated that they may have approximately 200 to 300 substrates each. Some of the targets are downstream kinases which are activated through phosphorylation and further phosphorylate additional targets. RPS6KA5/MSK1 and RPS6KA4/MSK2 can directly phosphorylate and activate transcription factors such as CREB1, ATF1, the NF-kappa-B isoform RELA/NFKB3, STAT1 and STAT3, but can also phosphorylate histone H3 and the nucleosomal protein HMGN1. RPS6KA5/MSK1 and RPS6KA4/MSK2 play important roles in the rapid induction of immediate-early genes in response to stress or mitogenic stimuli, either by inducing chromatin remodeling or by recruiting the transcription machinery. On the other hand, two other kinase targets, MAPKAPK2/MK2 and MAPKAPK3/MK3, participate in the control of gene expression mostly at the post-transcriptional level, by phosphorylating ZFP36 (tristetraprolin) and ELAVL1, and by regulating EEF2K, which is important for the elongation of mRNA during translation. MKNK1/MNK1 and MKNK2/MNK2, two other kinases activated by p38 MAPKs, regulate protein synthesis by phosphorylating the initiation factor EIF4E2. MAPK14 also interacts with casein kinase II, leading to its activation through autophosphorylation and further phosphorylation of TP53/p53. In the cytoplasm, the p38 MAPK pathway is an important regulator of protein turnover. For example, CFLAR is an inhibitor of TNF-induced apoptosis whose proteasome-mediated degradation is regulated by p38 MAPK phosphorylation. In a similar way, MAPK14 phosphorylates the ubiquitin ligase SIAH2, regulating its activity towards EGLN3. MAPK14 may also inhibit the lysosomal degradation pathway of autophagy by interfering with the intracellular trafficking of the transmembrane protein ATG9. Another function of MAPK14 is to regulate the endocytosis of membrane receptors by different mechanisms that impinge on the small GTPase RAB5A. In addition, clathrin-mediated EGFR internalization induced by inflammatory cytokines and UV irradiation depends on MAPK14-mediated phosphorylation of EGFR itself as well as of RAB5A effectors. Ectodomain shedding of transmembrane proteins is regulated by p38 MAPKs as well. In response to inflammatory stimuli, p38 MAPKs phosphorylate the membrane-associated metalloprotease ADAM17. Such phosphorylation is required for ADAM17-mediated ectodomain shedding of TGF-alpha family ligands, which results in the activation of EGFR signaling and cell proliferation. Another p38 MAPK substrate is FGFR1. FGFR1 can be translocated from the extracellular space into the cytosol and nucleus of target cells, and regulates processes such as rRNA synthesis and cell growth. FGFR1 translocation requires p38 MAPK activation. In the nucleus, many transcription factors are phosphorylated and activated by p38 MAPKs in response to different stimuli. Classical examples include ATF1, ATF2, ATF6, ELK1, PTPRH, DDIT3, TP53/p53 and MEF2C and MEF2A. The p38 MAPKs are emerging as important modulators of gene expression by regulating chromatin modifiers and remodelers. The promoters of several genes involved in the inflammatory response, such as IL6, IL8 and IL12B, display a p38 MAPK-dependent enrichment of histone H3 phosphorylation on 'Ser-10' (H3S10ph) in LPS-stimulated myeloid cells. This phosphorylation enhances the accessibility of the cryptic NF-kappa-B-binding sites marking promoters for increased NF-kappa-B recruitment. Phosphorylates CDC25B and CDC25C which is required for binding to 14-3-3 proteins and leads to initiation of a G2 delay after ultraviolet radiation. Phosphorylates TIAR following DNA damage, releasing TIAR from GADD45A mRNA and preventing mRNA degradation. The p38 MAPKs may also have kinase-independent roles, which are thought to be due to the binding to targets in the absence of phosphorylation. Protein O-Glc-N-acylation catalyzed by the OGT is regulated by MAPK14, and, although OGT does not seem to be phosphorylated by MAPK14, their interaction increases upon MAPK14 activation induced by glucose deprivation. This interaction may regulate OGT activity by recruiting it to specific targets such as neurofilament H, stimulating its O-Glc-N-acylation. Required in mid-fetal development for the growth of embryo-derived blood vessels in the labyrinth layer of the placenta. Also plays an essential role in developmental and stress-induced erythropoiesis, through regulation of EPO gene expression. Phosphorylates S100A9 at 'Thr-113'. This is Mitogen-activated protein kinase 14 from Pan troglodytes (Chimpanzee).